A 125-amino-acid polypeptide reads, in one-letter code: Small ribosomal subunit protein uS13 (125 aa).

The tract at residues 92–125 is disordered; it reads RRSLPARGQRTRTNARTRKGKRKTVAGKKKAGKK.

The protein belongs to the universal ribosomal protein uS13 family. In terms of assembly, part of the 30S ribosomal subunit. Forms a loose heterodimer with protein S19. Forms two bridges to the 50S subunit in the 70S ribosome.

Functionally, located at the top of the head of the 30S subunit, it contacts several helices of the 16S rRNA. In the 70S ribosome it contacts the 23S rRNA (bridge B1a) and protein L5 of the 50S subunit (bridge B1b), connecting the 2 subunits; these bridges are implicated in subunit movement. Contacts the tRNAs in the A and P-sites. The polypeptide is Small ribosomal subunit protein uS13 (Chlorobaculum parvum (strain DSM 263 / NCIMB 8327) (Chlorobium vibrioforme subsp. thiosulfatophilum)).